The sequence spans 393 residues: MEGRLVSKKEIVAMILAGGQGSRLGVLTKNLAKPAVPFGGKYRIIDFPLSNCSNSGIYTVGVLTQYKPLKLNEHIGIGDTWDLDRRDGGVSILPPYQKEKGGDWYKGTANAIYQNIEFIERYDPEYVLILSGDHIYKMDYDKMLEMHKQKEADATIAVINVPMHEASRFGIMNTNEDLSIYEFEEKPEHPKSTNASMGIYIFNWKILKKFLEEDELDQSSSNDFGKNIIPKMLNSGKKLIAYPFNGYWKDVGTIESLWEANMDLLKYEDELSLYDSEWKIYSANPVRPAQFIGKDAEIKSSLTVEGCIVHGKVENSVLFQGVYVGKGAIVKDAVIMPNTKIEDNVLIEKAIIGSEAIVCKGCKIGDGNKISVIASKEVVIGSKEVIEECAMVK.

Residues Tyr-105, Gly-170, 185 to 186 (EK), and Ser-196 contribute to the alpha-D-glucose 1-phosphate site.

This sequence belongs to the bacterial/plant glucose-1-phosphate adenylyltransferase family. Homotetramer.

It carries out the reaction alpha-D-glucose 1-phosphate + ATP + H(+) = ADP-alpha-D-glucose + diphosphate. It participates in glycan biosynthesis; glycogen biosynthesis. Involved in the biosynthesis of ADP-glucose, a building block required for the elongation reactions to produce glycogen. Catalyzes the reaction between ATP and alpha-D-glucose 1-phosphate (G1P) to produce pyrophosphate and ADP-Glc. The polypeptide is Glucose-1-phosphate adenylyltransferase (Clostridium perfringens (strain 13 / Type A)).